Here is a 1166-residue protein sequence, read N- to C-terminus: Reverse gyrase (1166 aa).

Residues 1–40 form an RG N-terminal-type zinc finger; that stretch reads MINVMYKNSCPNCGGDISADRLLNGLPCETCLPYINGIDG. Zn(2+)-binding residues include C10, C13, C28, and C31. Residues Q92 and 109–116 contribute to the ATP site; that span reads APTGLGKT. One can recognise a Helicase ATP-binding domain in the interval 96 to 285; the sequence is LRRLVSNQSF…ALRLLTGFEP (190 aa). The short motif at 190–193 is the DEAD box element; the sequence is DDAD. The segment at 576 to 1166 is topoisomerase I; the sequence is FNISTGLLIV…VNPLKSEQNV (591 aa). In terms of domain architecture, Toprim spans 580–743; it reads TGLLIVESPT…NIYRITYHEI (164 aa). Residue E586 coordinates Mg(2+). The RG C-terminal-type zinc finger occupies 662–689; the sequence is IKKCLDCNKTFSIASDKCPYCGSTNVQT. Residues C665, C668, C679, and C682 each contribute to the Zn(2+) site. D712 serves as a coordination point for Mg(2+). Residues 759-1157 enclose the Topo IA-type catalytic domain; that stretch reads NTNLVMSQIV…EIFSEISTLV (399 aa). Y903 acts as the O-(5'-phospho-DNA)-tyrosine intermediate in catalysis.

In the N-terminal section; belongs to the DEAD box helicase family. DDVD subfamily. It in the C-terminal section; belongs to the type IA topoisomerase family. In terms of assembly, monomer. It depends on Zn(2+) as a cofactor. Mg(2+) serves as cofactor.

Its subcellular location is the cytoplasm. It carries out the reaction ATP + H2O = ADP + phosphate + H(+). Its activity is regulated as follows. Inhibited by UV light-induced lesions; substrate is completely cleaved but a nicked form accumulates, suggesting the reaction is blocked between the cleavage and ligation steps. Inhibited by actinomycin D; substrate DNA remains negatively supercoiled in this case. Activity is stimulated by SSB from S.solfataricus strain P2. Positive supercoiling is inhibited by Sul7d (also called Sso7d) from S.solfataricus strain MT4; SSB from S.solfataricus strain P2 relieves this inhibition. Functionally, modifies the topological state of DNA by introducing positive supercoils in an ATP-dependent process. Increases the linking number in steps of +1. In vitro requires high concentrations to supercoil negatively supercoiled DNA, relaxes plasmid DNA first; DNA single-strand binding protein (SSB) from S.solfataricus strain P2 stimulates positive supercoiling. SSB stimulates DNA-binding by reverse gyrase, and thus all subsequent steps. Binds to single-stranded DNA, transiently cleaves and then rejoins the ends, introducing a positive supercoil in the process. The scissile phosphodiester is attacked by the catalytic tyrosine of the enzyme, resulting in the formation of a DNA-(5'-phosphotyrosyl)-enzyme intermediate. May be involved in DNA damage response. Probably involved in rewinding DNA strands in regions of the chromosome that have opened up to allow replication, transcription, DNA repair and/or for DNA protection. This Saccharolobus shibatae (strain ATCC 51178 / DSM 5389 / JCM 8931 / NBRC 15437 / B12) (Sulfolobus shibatae) protein is Reverse gyrase.